Reading from the N-terminus, the 72-residue chain is Probable transcription factor elt-4 (72 aa).

Residues 16–40 (CSNCNGTNTTLWRRKAEGDPVCNAC) form a GATA-type zinc finger.

Its subcellular location is the nucleus. In terms of biological role, probable transcription factor. Plays a role in regulating heme-dependent expression of heme transporter hrg-1. Modulates lifespan in a daf-16-dependent manner. This is Probable transcription factor elt-4 from Caenorhabditis elegans.